The primary structure comprises 396 residues: S-adenosylmethionine synthase (396 aa).

Residue histidine 16 participates in ATP binding. Aspartate 18 is a binding site for Mg(2+). Residue glutamate 44 coordinates K(+). L-methionine-binding residues include glutamate 57 and glutamine 100. The segment at 100–110 is flexible loop; it reads QSQDIARGVDN. Residues 162-164, 228-229, aspartate 237, 243-244, alanine 260, and lysine 264 each bind ATP; these read DGK, RF, and RK. Aspartate 237 lines the L-methionine pocket. Lysine 268 is an L-methionine binding site.

This sequence belongs to the AdoMet synthase family. In terms of assembly, homotetramer; dimer of dimers. It depends on Mg(2+) as a cofactor. K(+) serves as cofactor.

The protein localises to the cytoplasm. It catalyses the reaction L-methionine + ATP + H2O = S-adenosyl-L-methionine + phosphate + diphosphate. The protein operates within amino-acid biosynthesis; S-adenosyl-L-methionine biosynthesis; S-adenosyl-L-methionine from L-methionine: step 1/1. Its function is as follows. Catalyzes the formation of S-adenosylmethionine (AdoMet) from methionine and ATP. The overall synthetic reaction is composed of two sequential steps, AdoMet formation and the subsequent tripolyphosphate hydrolysis which occurs prior to release of AdoMet from the enzyme. The protein is S-adenosylmethionine synthase of Myxococcus xanthus (strain DK1622).